The sequence spans 54 residues: Large ribosomal subunit protein bL33A (54 aa).

The protein belongs to the bacterial ribosomal protein bL33 family.

This Mycobacterium marinum (strain ATCC BAA-535 / M) protein is Large ribosomal subunit protein bL33A.